Consider the following 409-residue polypeptide: Arginine biosynthesis bifunctional protein ArgJ (409 aa).

Substrate contacts are provided by threonine 156, lysine 182, threonine 193, glutamate 280, asparagine 404, and serine 409. The Nucleophile role is filled by threonine 193.

The protein belongs to the ArgJ family. As to quaternary structure, heterotetramer of two alpha and two beta chains.

It is found in the cytoplasm. It carries out the reaction N(2)-acetyl-L-ornithine + L-glutamate = N-acetyl-L-glutamate + L-ornithine. The enzyme catalyses L-glutamate + acetyl-CoA = N-acetyl-L-glutamate + CoA + H(+). It functions in the pathway amino-acid biosynthesis; L-arginine biosynthesis; L-ornithine and N-acetyl-L-glutamate from L-glutamate and N(2)-acetyl-L-ornithine (cyclic): step 1/1. Its pathway is amino-acid biosynthesis; L-arginine biosynthesis; N(2)-acetyl-L-ornithine from L-glutamate: step 1/4. Its function is as follows. Catalyzes two activities which are involved in the cyclic version of arginine biosynthesis: the synthesis of N-acetylglutamate from glutamate and acetyl-CoA as the acetyl donor, and of ornithine by transacetylation between N(2)-acetylornithine and glutamate. This Nitrosomonas europaea (strain ATCC 19718 / CIP 103999 / KCTC 2705 / NBRC 14298) protein is Arginine biosynthesis bifunctional protein ArgJ.